A 237-amino-acid polypeptide reads, in one-letter code: Uridylate kinase (237 aa).

12 to 15 serves as a coordination point for ATP; the sequence is KLSG. The interval 20–25 is involved in allosteric activation by GTP; it reads GEDGLG. UMP is bound at residue G54. ATP-binding residues include G55 and R59. UMP-binding positions include D74 and 135-142; that span reads TGNPFFTT. ATP-binding residues include T162, Y168, and D171.

The protein belongs to the UMP kinase family. In terms of assembly, homohexamer.

It localises to the cytoplasm. It catalyses the reaction UMP + ATP = UDP + ADP. Its pathway is pyrimidine metabolism; CTP biosynthesis via de novo pathway; UDP from UMP (UMPK route): step 1/1. Allosterically activated by GTP. Inhibited by UTP. Its function is as follows. Catalyzes the reversible phosphorylation of UMP to UDP. This is Uridylate kinase from Haemophilus influenzae (strain PittGG).